The chain runs to 165 residues: Protein E6 (165 aa).

2 zinc fingers span residues 52–88 and 125–161; these read CNFC…CRVC and CYTC…CRLC.

The protein belongs to the papillomaviridae E6 protein family. In terms of assembly, forms homodimers. Interacts with ubiquitin-protein ligase UBE3A/E6-AP; this interaction stimulates UBE3A ubiquitin activity. Interacts with host BAK1.

The protein resides in the host cytoplasm. Its subcellular location is the host nucleus. Functionally, plays a major role in the induction and maintenance of cellular transformation. E6 associates with host UBE3A/E6-AP ubiquitin-protein ligase and modulates its activity. Protects host keratinocytes from apoptosis by mediating the degradation of host BAK1. May also inhibit host immune response. This chain is Protein E6, found in Homo sapiens (Human).